A 494-amino-acid polypeptide reads, in one-letter code: Guanosine-5'-triphosphate,3'-diphosphate pyrophosphatase (494 aa).

It belongs to the GppA/Ppx family. GppA subfamily.

The catalysed reaction is guanosine 3'-diphosphate 5'-triphosphate + H2O = guanosine 3',5'-bis(diphosphate) + phosphate + H(+). It participates in purine metabolism; ppGpp biosynthesis; ppGpp from GTP: step 2/2. Catalyzes the conversion of pppGpp to ppGpp. Guanosine pentaphosphate (pppGpp) is a cytoplasmic signaling molecule which together with ppGpp controls the 'stringent response', an adaptive process that allows bacteria to respond to amino acid starvation, resulting in the coordinated regulation of numerous cellular activities. This Shigella sonnei (strain Ss046) protein is Guanosine-5'-triphosphate,3'-diphosphate pyrophosphatase.